The sequence spans 240 residues: 1-(5-phosphoribosyl)-5-[(5-phosphoribosylamino)methylideneamino] imidazole-4-carboxamide isomerase (240 aa).

Asp-8 serves as the catalytic Proton acceptor. The active-site Proton donor is Asp-129.

Belongs to the HisA/HisF family.

The protein localises to the cytoplasm. The catalysed reaction is 1-(5-phospho-beta-D-ribosyl)-5-[(5-phospho-beta-D-ribosylamino)methylideneamino]imidazole-4-carboxamide = 5-[(5-phospho-1-deoxy-D-ribulos-1-ylimino)methylamino]-1-(5-phospho-beta-D-ribosyl)imidazole-4-carboxamide. The protein operates within amino-acid biosynthesis; L-histidine biosynthesis; L-histidine from 5-phospho-alpha-D-ribose 1-diphosphate: step 4/9. The chain is 1-(5-phosphoribosyl)-5-[(5-phosphoribosylamino)methylideneamino] imidazole-4-carboxamide isomerase from Clostridium beijerinckii (strain ATCC 51743 / NCIMB 8052) (Clostridium acetobutylicum).